The chain runs to 83 residues: Apolipoprotein C-I, basic form (83 aa).

Residues 1 to 26 (MRLFLSLPVLVVVLSMVLEGPAPAQG) form the signal peptide.

It belongs to the apolipoprotein C1 family.

Its subcellular location is the secreted. Functionally, inhibitor of lipoprotein binding to the low density lipoprotein (LDL) receptor, LDL receptor-related protein, and very low density lipoprotein (VLDL) receptor. Associates with high density lipoproteins (HDL) and the triacylglycerol-rich lipoproteins in the plasma and makes up about 10% of the protein of the VLDL and 2% of that of HDL. Appears to interfere directly with fatty acid uptake and is also the major plasma inhibitor of cholesteryl ester transfer protein (CETP). Binds free fatty acids and reduces their intracellular esterification. Modulates the interaction of APOE with beta-migrating VLDL and inhibits binding of beta-VLDL to the LDL receptor-related protein. The sequence is that of Apolipoprotein C-I, basic form (APOC1B) from Cercocebus atys (Sooty mangabey).